We begin with the raw amino-acid sequence, 3434 residues long: Genome polyprotein (3434 aa).

The interval 2 to 15 (SKKPGGPGKPRVVN) is interaction with host EXOC1. Residues 2–110 (SKKPGGPGKP…KQKKRGGSET (109 aa)) are Cytoplasmic-facing. A hydrophobic; homodimerization of capsid protein C region spans residues 37–72 (LLDGRGPIRFVLALLAFFRFTALAPTKALMRRWKSV). The propeptide at 106 to 125 (GGSETSVLMLIFMLIGFAAA) is ER anchor for the capsid protein C, removed in mature form by serine protease NS3. The helical transmembrane segment at 111–131 (SVLMLIFMLIGFAAALKLSTF) threads the bilayer. The Extracellular portion of the chain corresponds to 132 to 251 (QGKIMMTVNA…ATRYLTKTEN (120 aa)). Asn140 carries N-linked (GlcNAc...) asparagine; by host glycosylation. A helical membrane pass occupies residues 252–272 (WIIRNPGYALVAVVLGWMLGS). At 273-277 (NTGQK) the chain is on the cytoplasmic side. Residues 278-292 (VIFTVLLLLVAPAYS) form a helical membrane-spanning segment. Residues 293-745 (FNCLGMSSRD…QVFGGAFRTL (453 aa)) lie on the Extracellular side of the membrane. 6 disulfides stabilise this stretch: Cys295/Cys322, Cys352/Cys408, Cys352/Cys413, Cys366/Cys397, Cys384/Cys408, and Cys384/Cys413. The segment at 390 to 403 (DRGWGNGCGLFGKG) is fusion peptide. The N-linked (GlcNAc...) asparagine; by host glycan is linked to Asn446. 2 disulfides stabilise this stretch: Cys482-Cys580 and Cys597-Cys628. The chain crosses the membrane as a helical span at residues 746–766 (FGGMSWISPGLLGALLLWMGV). At 767–772 (NARDKS) the chain is on the cytoplasmic side. The helical transmembrane segment at 773–793 (IALAFLATGGVLLFLATNVHA) threads the bilayer. Over 794–1218 (DTGCAIDITR…AFAESNNGGD (425 aa)) the chain is Extracellular. 2 disulfides stabilise this stretch: Cys797-Cys808 and Cys848-Cys936. N-linked (GlcNAc...) asparagine; by host glycosylation is found at Asn923 and Asn968. 4 cysteine pairs are disulfide-bonded: Cys972/Cys1016, Cys1073/Cys1122, Cys1084/Cys1105, and Cys1106/Cys1109. Residue Asn1000 is glycosylated (N-linked (GlcNAc...) (high mannose) asparagine; by host). Residues 1219 to 1239 (VIHLALIAVFKVQPAFLVASL) traverse the membrane as a helical segment. At 1240–1249 (TRSRWTNQEN) the chain is on the cytoplasmic side. A helical transmembrane segment spans residues 1250–1270 (LVLVLGAAFFQMAASDLELTI). The Lumenal portion of the chain corresponds to 1271–1286 (PGLLNSAATAWMVLRA). The helical transmembrane segment at 1287–1307 (MAFPSTSAIAMPMLAMLAPGM) threads the bilayer. Residue Arg1308 is a topological domain, cytoplasmic. Residues 1309–1329 (MLHLDTYRIVLLLIGICSLLN) form a helical membrane-spanning segment. Over 1330–1340 (ERRRSVEKKKG) the chain is Lumenal. A helical membrane pass occupies residues 1341-1361 (AVLIGLALTSTGYFSPTIMAA). The Cytoplasmic portion of the chain corresponds to 1362 to 1373 (GLMICNPNKKRG). The helical transmembrane segment at 1374-1394 (WPATEVLTAVGLMFAIVGGLA) threads the bilayer. At 1395 to 1397 (ELD) the chain is on the lumenal side. A helical membrane pass occupies residues 1398 to 1418 (IDSMSVPFTIAGLMLVSYVIS). The Cytoplasmic segment spans residues 1419–1475 (GKATDMWLERAADVSWEAGAAITGTSERLDVQLDDDGDFHLLNDPGVPWKIWVLRMT). Residues 1426 to 1465 (LERAADVSWEAGAAITGTSERLDVQLDDDGDFHLLNDPGV) are interacts with and activates NS3 protease. The helical intramembrane region spans 1476–1496 (CLSVAAITPRAILPSAFGYWL). Residues 1497-2172 (TLKYTKRGGV…RMALEELPDA (676 aa)) lie on the Cytoplasmic side of the membrane. The Peptidase S7 domain occupies 1504–1681 (GGVFWDTPSP…ERVEEPVPEA (178 aa)). Catalysis depends on charge relay system; for serine protease NS3 activity residues His1554, Asp1578, and Ser1638. Residues 1684-1840 (PEMLKKRQLT…DTNSPVHDVS (157 aa)) enclose the Helicase ATP-binding domain. Residues 1688–1691 (KKRQ) form an important for RNA-binding region. Position 1697–1704 (1697–1704 (LHPGAGKT)) interacts with ATP. The DEAH box signature appears at 1788–1791 (DEAH). Positions 1851–2016 (GFEWITDYAG…GLVAQLYGPE (166 aa)) constitute a Helicase C-terminal domain. The residue at position 1892 (Lys1892) is an N6-acetyllysine; by host. The disordered stretch occupies residues 1958 to 1979 (AAQRRGRVGRNPSQIGDEYHYG). Residues 2167 to 2171 (EELPD) form a regulates the ATPase activity of NS3 helicase region. The helical transmembrane segment at 2173–2193 (LETITLIAALGVMTAGFFLLM) threads the bilayer. Over 2194–2197 (MQRK) the chain is Lumenal. Positions 2198 to 2218 (GIGKLGLGALVLVVATFFLWM) form an intramembrane region, helical. Topologically, residues 2219–2220 (SD) are lumenal. The helical transmembrane segment at 2221-2241 (VSGTKIAGVLLLALLMMVVLI) threads the bilayer. The Cytoplasmic segment spans residues 2242-2256 (PEPEKQRSQTDNQLA). A helical transmembrane segment spans residues 2257–2271 (VFLICVLLVVGLVAA). Topologically, residues 2272 to 2309 (NEYGMLERTKTDIRNLFGKSLIEENEVHIPPFDFFTLD) are lumenal. The helical intramembrane region spans 2310–2330 (LKPATAWALYGGSTVVLTPLI). Topologically, residues 2331–2366 (KHLVTSQYVTTSLASINAQAGSLFTLPKGIPFTDFD) are lumenal. A helical transmembrane segment spans residues 2367 to 2394 (LSVALVFLGCWGQVTLTTLIMATILVTL). Over 2395–2446 (HYGYLLPGWQAEALRAAQKRTAAGIMKNAVVDGIVATDVPELERTTPQMQKR) the chain is Cytoplasmic. The chain crosses the membrane as a helical span at residues 2447-2467 (LGQILLVLASVAAVCVNPRIT). The Lumenal segment spans residues 2468–2498 (TIREAGILCTAAALTLWDNNASAAWNSTTAT). Residues 2499–2519 (GLCHVMRGSWIAGASIAWTLI) traverse the membrane as a helical segment. Over 2520–3434 (KNAEKPAFKR…ETHVSEDRVL (915 aa)) the chain is Cytoplasmic. The region spanning 2530–2795 (GRAGGRTLGE…DVNLGSGTRA (266 aa)) is the mRNA cap 0-1 NS5-type MT domain. Ser2585 contacts S-adenosyl-L-methionine. At Ser2585 the chain carries Phosphoserine. The For 2'-O-MTase activity role is filled by Lys2590. S-adenosyl-L-methionine is bound by residues Gly2615, Trp2616, Thr2633, Lys2634, Asp2660, and Val2661. The active-site For 2'-O-MTase activity is the Asp2675. Ile2676 is a binding site for S-adenosyl-L-methionine. Active-site for 2'-O-MTase activity residues include Lys2711 and Glu2747. Tyr2749 lines the S-adenosyl-L-methionine pocket. 4 residues coordinate Zn(2+): Glu2969, His2973, Cys2978, and Cys2981. Residues 3059-3211 (GKIYADDTAG…KPLDDRFSTA (153 aa)) form the RdRp catalytic domain. His3246, Cys3262, and Cys3381 together coordinate Zn(2+).

The protein in the N-terminal section; belongs to the class I-like SAM-binding methyltransferase superfamily. mRNA cap 0-1 NS5-type methyltransferase family. In terms of assembly, homodimer. Interacts (via N-terminus) with host EXOC1 (via C-terminus); this interaction results in EXOC1 degradation through the proteasome degradation pathway. Forms heterodimers with envelope protein E in the endoplasmic reticulum and Golgi. As to quaternary structure, homodimer; in the endoplasmic reticulum and Golgi. Interacts with protein prM. Interacts with non-structural protein 1. In terms of assembly, homodimer; Homohexamer when secreted. Interacts with envelope protein E. NS1 interacts with NS4B. Interacts with host complement protein CFH; this interaction leads to the degradation of C3. Interacts (via N-terminus) with serine protease NS3. As to quaternary structure, forms a heterodimer with serine protease NS3. May form homooligomers. In terms of assembly, forms a heterodimer with NS2B. Interacts with non-structural protein 2A (via N-terminus). Interacts with NS4B. Interacts with unphosphorylated RNA-directed RNA polymerase NS5; this interaction stimulates RNA-directed RNA polymerase NS5 guanylyltransferase activity. Interacts with serine protease NS3. As to quaternary structure, homodimer. Interacts with host STAT2; this interaction inhibits the phosphorylation of the latter, and, when all viral proteins are present (polyprotein), targets STAT2 for degradation. Interacts with serine protease NS3. In terms of processing, specific enzymatic cleavages in vivo yield mature proteins. Cleavages in the lumen of endoplasmic reticulum are performed by host signal peptidase, whereas cleavages in the cytoplasmic side are performed by serine protease NS3. Signal cleavage at the 2K-4B site requires a prior NS3 protease-mediated cleavage at the 4A-2K site. Post-translationally, cleaved in post-Golgi vesicles by a host furin, releasing the mature small envelope protein M, and peptide pr. This cleavage is incomplete as up to 30% of viral particles still carry uncleaved prM. N-glycosylated. In terms of processing, N-glycosylated. The excreted form is glycosylated and this is required for efficient secretion of the protein from infected cells. Post-translationally, acetylated by host KAT5. Acetylation modulates NS3 RNA-binding and unwinding activities and plays an important positive role for viral replication. Phosphorylated on serines residues. This phosphorylation may trigger NS5 nuclear localization.

The protein localises to the virion. Its subcellular location is the host nucleus. It localises to the host cytoplasm. The protein resides in the host perinuclear region. It is found in the secreted. The protein localises to the virion membrane. Its subcellular location is the host endoplasmic reticulum membrane. It catalyses the reaction Selective hydrolysis of -Xaa-Xaa-|-Yaa- bonds in which each of the Xaa can be either Arg or Lys and Yaa can be either Ser or Ala.. It carries out the reaction RNA(n) + a ribonucleoside 5'-triphosphate = RNA(n+1) + diphosphate. The catalysed reaction is a ribonucleoside 5'-triphosphate + H2O = a ribonucleoside 5'-diphosphate + phosphate + H(+). The enzyme catalyses ATP + H2O = ADP + phosphate + H(+). It catalyses the reaction a 5'-end (5'-triphosphoguanosine)-ribonucleoside in mRNA + S-adenosyl-L-methionine = a 5'-end (N(7)-methyl 5'-triphosphoguanosine)-ribonucleoside in mRNA + S-adenosyl-L-homocysteine. It carries out the reaction a 5'-end (N(7)-methyl 5'-triphosphoguanosine)-ribonucleoside in mRNA + S-adenosyl-L-methionine = a 5'-end (N(7)-methyl 5'-triphosphoguanosine)-(2'-O-methyl-ribonucleoside) in mRNA + S-adenosyl-L-homocysteine + H(+). Plays a role in virus budding by binding to the cell membrane and gathering the viral RNA into a nucleocapsid that forms the core of a mature virus particle. During virus entry, may induce genome penetration into the host cytoplasm after hemifusion induced by the surface proteins. Can migrate to the cell nucleus where it modulates host functions. Overcomes the anti-viral effects of host EXOC1 by sequestering and degrading the latter through the proteasome degradation pathway. In terms of biological role, inhibits RNA silencing by interfering with host Dicer. Functionally, prevents premature fusion activity of envelope proteins in trans-Golgi by binding to envelope protein E at pH6.0. After virion release in extracellular space, gets dissociated from E dimers. Its function is as follows. Acts as a chaperone for envelope protein E during intracellular virion assembly by masking and inactivating envelope protein E fusion peptide. prM is the only viral peptide matured by host furin in the trans-Golgi network probably to avoid catastrophic activation of the viral fusion activity in acidic Golgi compartment prior to virion release. prM-E cleavage is inefficient, and many virions are only partially matured. These uncleaved prM would play a role in immune evasion. May play a role in virus budding. Exerts cytotoxic effects by activating a mitochondrial apoptotic pathway through M ectodomain. May display a viroporin activity. In terms of biological role, binds to host cell surface receptor and mediates fusion between viral and cellular membranes. Envelope protein is synthesized in the endoplasmic reticulum in the form of heterodimer with protein prM. They play a role in virion budding in the ER, and the newly formed immature particle is covered with 60 spikes composed of heterodimer between precursor prM and envelope protein E. The virion is transported to the Golgi apparatus where the low pH causes dissociation of PrM-E heterodimers and formation of E homodimers. prM-E cleavage is inefficient, and many virions are only partially matured. These uncleaved prM would play a role in immune evasion. Functionally, involved in immune evasion, pathogenesis and viral replication. Once cleaved off the polyprotein, is targeted to three destinations: the viral replication cycle, the plasma membrane and the extracellular compartment. Essential for viral replication. Required for formation of the replication complex and recruitment of other non-structural proteins to the ER-derived membrane structures. Excreted as a hexameric lipoparticle that plays a role against host immune response. Antagonizing the complement function. Binds to the host macrophages and dendritic cells. Inhibits signal transduction originating from Toll-like receptor 3 (TLR3). Its function is as follows. Component of the viral RNA replication complex that functions in virion assembly and antagonizes the host alpha/beta interferon antiviral response. Required cofactor for the serine protease function of NS3. May have membrane-destabilizing activity and form viroporins. In terms of biological role, displays three enzymatic activities: serine protease, NTPase and RNA helicase. NS3 serine protease, in association with NS2B, performs its autocleavage and cleaves the polyprotein at dibasic sites in the cytoplasm: C-prM, NS2A-NS2B, NS2B-NS3, NS3-NS4A, NS4A-2K and NS4B-NS5. NS3 RNA helicase binds RNA and unwinds dsRNA in the 3' to 5' direction. Functionally, regulates the ATPase activity of the NS3 helicase activity. NS4A allows NS3 helicase to conserve energy during unwinding. Its function is as follows. Functions as a signal peptide for NS4B and is required for the interferon antagonism activity of the latter. Induces the formation of ER-derived membrane vesicles where the viral replication takes place. Inhibits interferon (IFN)-induced host STAT1 phosphorylation and nuclear translocation, thereby preventing the establishment of cellular antiviral state by blocking the IFN-alpha/beta pathway. Inhibits STAT2 translocation in the nucleus after IFN-alpha treatment. In terms of biological role, replicates the viral (+) and (-) RNA genome, and performs the capping of genomes in the cytoplasm. NS5 methylates viral RNA cap at guanine N-7 and ribose 2'-O positions. Besides its role in RNA genome replication, also prevents the establishment of cellular antiviral state by blocking the interferon-alpha/beta (IFN-alpha/beta) signaling pathway. Inhibits host TYK2 and STAT2 phosphorylation, thereby preventing activation of JAK-STAT signaling pathway. This Culex annulirostris (Common banded mosquito) protein is Genome polyprotein.